A 425-amino-acid polypeptide reads, in one-letter code: Dihydroorotase (425 aa).

Residues His-61 and His-63 each contribute to the Zn(2+) site. Substrate is bound by residues 63-65 (HLR) and Asn-95. Asp-153, His-180, and His-233 together coordinate Zn(2+). Asn-279 contributes to the substrate binding site. Asp-306 is a binding site for Zn(2+). The active site involves Asp-306. Residue His-310 coordinates substrate.

Belongs to the metallo-dependent hydrolases superfamily. DHOase family. Class I DHOase subfamily. Requires Zn(2+) as cofactor.

The enzyme catalyses (S)-dihydroorotate + H2O = N-carbamoyl-L-aspartate + H(+). It participates in pyrimidine metabolism; UMP biosynthesis via de novo pathway; (S)-dihydroorotate from bicarbonate: step 3/3. Catalyzes the reversible cyclization of carbamoyl aspartate to dihydroorotate. This is Dihydroorotase from Trichlorobacter lovleyi (strain ATCC BAA-1151 / DSM 17278 / SZ) (Geobacter lovleyi).